The chain runs to 376 residues: Cytochrome b (376 aa).

4 helical membrane passes run 28 to 48 (YGFL…FLAS), 72 to 94 (WCFR…LHIL), 107 to 127 (SWIS…IGYV), and 169 to 189 (FFVL…IHIF). The heme b site is built by histidine 78 and histidine 92. Positions 173 and 187 each coordinate heme b. An a ubiquinone-binding site is contributed by histidine 192. 4 consecutive transmembrane segments (helical) span residues 214-234 (LLSL…IQSI), 274-294 (IPSK…LFLL), 317-337 (VPII…CQLP), and 340-360 (IFIL…LFAL).

This sequence belongs to the cytochrome b family. In terms of assembly, the main subunits of complex b-c1 are: cytochrome b, cytochrome c1 and the Rieske protein. Heme b is required as a cofactor.

It is found in the mitochondrion inner membrane. Functionally, component of the ubiquinol-cytochrome c reductase complex (complex III or cytochrome b-c1 complex) that is part of the mitochondrial respiratory chain. The b-c1 complex mediates electron transfer from ubiquinol to cytochrome c. Contributes to the generation of a proton gradient across the mitochondrial membrane that is then used for ATP synthesis. This is Cytochrome b (MT-CYB) from Plasmodium chabaudi.